Consider the following 500-residue polypeptide: NAD(P)H-quinone oxidoreductase chain 4, chloroplastic (500 aa).

Helical transmembrane passes span 4–24 (FPWL…MLFL), 35–55 (YTIC…CYNF), 87–107 (IGTI…AFPV), 113–130 (FFHF…GSFS), 134–154 (LLLF…LLSM), 167–187 (FILY…GISL), 211–231 (ILFY…IPLH), 242–262 (HYST…YGLV), 272–292 (AHSM…IYAA), 305–325 (IAYS…SITD), 330–350 (GAIL…FLAG), 386–406 (LALP…GIIT), 416–436 (IFII…LLSM), and 462–482 (LFLS…PDFV).

It belongs to the complex I subunit 4 family.

It localises to the plastid. The protein resides in the chloroplast thylakoid membrane. The enzyme catalyses a plastoquinone + NADH + (n+1) H(+)(in) = a plastoquinol + NAD(+) + n H(+)(out). The catalysed reaction is a plastoquinone + NADPH + (n+1) H(+)(in) = a plastoquinol + NADP(+) + n H(+)(out). The protein is NAD(P)H-quinone oxidoreductase chain 4, chloroplastic (ndhD) of Arabidopsis thaliana (Mouse-ear cress).